The sequence spans 394 residues: 4-hydroxybenzoate 3-monooxygenase (NAD(P)H) (394 aa).

Residues E32, 42–47 (TIRAGV), and Q102 contribute to the FAD site. Substrate contacts are provided by residues Y203, 214 to 216 (STR), and Y224. D288 is an FAD binding site. P295 serves as a coordination point for substrate. 301–302 (LN) contacts FAD.

Belongs to the aromatic-ring hydroxylase family. Requires FAD as cofactor.

The catalysed reaction is 4-hydroxybenzoate + NADH + O2 + H(+) = 3,4-dihydroxybenzoate + NAD(+) + H2O. The enzyme catalyses 4-hydroxybenzoate + NADPH + O2 + H(+) = 3,4-dihydroxybenzoate + NADP(+) + H2O. Its function is as follows. Involved in the degradation of 4-hydroxybenzoate (4HB) via the protocatechuate (PCA) 2,3-cleavage pathway. Catalyzes the conversion of 4HB into 2-hydroxypenta-2,4-dienoate (HPD). It is highly specific for 4-hydroxybenzoate, and is able to utilize both NADH and NADPH as electron donors at approximately equal rates. The sequence is that of 4-hydroxybenzoate 3-monooxygenase (NAD(P)H) (praI) from Paenibacillus sp.